Here is a 1236-residue protein sequence, read N- to C-terminus: Complement factor H (1236 aa).

An N-terminal signal peptide occupies residues 1–18; that stretch reads MRFPAKIVWLVLWTVCVA. Sushi domains lie at 19-82, 83-143, 144-207, 208-264, 265-322, 325-383, 385-442, 444-505, 507-562, 565-623, 627-685, 688-745, 750-804, 809-866, 868-936, 937-994, 995-1053, 1054-1111, 1114-1172, and 1173-1235; these read EDCK…ICRK, KPCA…ICEV, VKCL…KCVE, IFCK…TCIE, ITCD…RCAW, CSYP…EEPC, RQCI…RCIR, KTCS…VCIK, CDRP…KAAC, RECS…TCKV, KSCA…VCIE, RTCG…QCIA, RKCK…DCNE, QLCP…RCIE, IGCS…QCVG, LPCG…DCIS, TNCV…ACRD, VSCG…QCKD, GKCG…KCLE, and ACVI…YPRC. Disulfide bonds link C21/C66, C52/C80, C85/C129, C114/C141, C146/C192, C178/C205, C210/C251, C237/C262, C267/C309, C294/C320, C325/C372, C355/C383, C387/C429, C414/C440, C446/C492, C475/C503, C507/C551, C534/C562, C567/C609, C595/C621, C629/C672, C658/C683, C690/C732, C718/C743, C752/C791, C780/C802, C811/C853, C839/C864, C870/C923, C909/C934, C939/C981, C967/C992, C997/C1040, C1026/C1051, C1056/C1098, C1084/C1109, C1116/C1159, C1145/C1170, C1174/C1225, and C1208/C1235. Y168 and Y170 each carry sulfotyrosine. Sulfotyrosine is present on residues Y465 and Y473. Y575, Y579, and Y585 each carry sulfotyrosine. N775 carries an N-linked (GlcNAc...) asparagine glycan. N1100 carries N-linked (GlcNAc...) asparagine glycosylation.

Homodimer. Also forms homooligomers. Interacts with complement protein C3b; this interaction inhibits complement activation. Interacts with complement protein C3d. Interacts with CR3/ITGAM; this interaction mediates adhesion of neutrophils to pathogens leading to pathogen clearance. Post-translationally, sulfated on tyrosine residues. In terms of tissue distribution, CFH is one of the most abundant complement components in blood where the liver is the major source of CFH protein in vivo. in addition, CFH is secreted by additional cell types including monocytes, fibroblasts, or endothelial cells.

The protein localises to the secreted. Its function is as follows. Glycoprotein that plays an essential role in maintaining a well-balanced immune response by modulating complement activation. Acts as a soluble inhibitor of complement, where its binding to self markers such as glycan structures prevents complement activation and amplification on cell surfaces. Accelerates the decay of the complement alternative pathway (AP) C3 convertase C3bBb, thus preventing local formation of more C3b, the central player of the complement amplification loop. As a cofactor of the serine protease factor I, CFH also regulates proteolytic degradation of already-deposited C3b. In addition, mediates several cellular responses through interaction with specific receptors. For example, interacts with CR3/ITGAM receptor and thereby mediates the adhesion of human neutrophils to different pathogens. In turn, these pathogens are phagocytosed and destroyed. The chain is Complement factor H (CFH) from Bos taurus (Bovine).